Reading from the N-terminus, the 295-residue chain is UDP-3-O-acyl-N-acetylglucosamine deacetylase (295 aa).

Residues His-75, His-232, and Asp-236 each contribute to the Zn(2+) site. His-259 functions as the Proton donor in the catalytic mechanism.

It belongs to the LpxC family. Zn(2+) is required as a cofactor.

The enzyme catalyses a UDP-3-O-[(3R)-3-hydroxyacyl]-N-acetyl-alpha-D-glucosamine + H2O = a UDP-3-O-[(3R)-3-hydroxyacyl]-alpha-D-glucosamine + acetate. It functions in the pathway glycolipid biosynthesis; lipid IV(A) biosynthesis; lipid IV(A) from (3R)-3-hydroxytetradecanoyl-[acyl-carrier-protein] and UDP-N-acetyl-alpha-D-glucosamine: step 2/6. Functionally, catalyzes the hydrolysis of UDP-3-O-myristoyl-N-acetylglucosamine to form UDP-3-O-myristoylglucosamine and acetate, the committed step in lipid A biosynthesis. The sequence is that of UDP-3-O-acyl-N-acetylglucosamine deacetylase from Helicobacter pylori (strain J99 / ATCC 700824) (Campylobacter pylori J99).